A 510-amino-acid polypeptide reads, in one-letter code: 2,3-bisphosphoglycerate-independent phosphoglycerate mutase (510 aa).

Mn(2+) is bound by residues Asp12 and Ser62. Ser62 serves as the catalytic Phosphoserine intermediate. Substrate contacts are provided by residues His121, 151–152 (RD), Arg183, Arg189, 258–261 (RPDR), and Lys331. Mn(2+)-binding residues include Asp398, His402, Asp439, His440, and His458.

It belongs to the BPG-independent phosphoglycerate mutase family. As to quaternary structure, monomer. Mn(2+) is required as a cofactor.

It carries out the reaction (2R)-2-phosphoglycerate = (2R)-3-phosphoglycerate. The protein operates within carbohydrate degradation; glycolysis; pyruvate from D-glyceraldehyde 3-phosphate: step 3/5. Its function is as follows. Catalyzes the interconversion of 2-phosphoglycerate and 3-phosphoglycerate. This Clostridioides difficile (strain 630) (Peptoclostridium difficile) protein is 2,3-bisphosphoglycerate-independent phosphoglycerate mutase.